Consider the following 289-residue polypeptide: ATP synthase gamma chain (289 aa).

The protein belongs to the ATPase gamma chain family. F-type ATPases have 2 components, CF(1) - the catalytic core - and CF(0) - the membrane proton channel. CF(1) has five subunits: alpha(3), beta(3), gamma(1), delta(1), epsilon(1). CF(0) has three main subunits: a, b and c.

The protein localises to the cell inner membrane. Its function is as follows. Produces ATP from ADP in the presence of a proton gradient across the membrane. The gamma chain is believed to be important in regulating ATPase activity and the flow of protons through the CF(0) complex. In Anaeromyxobacter dehalogenans (strain 2CP-C), this protein is ATP synthase gamma chain.